The chain runs to 448 residues: Adenylosuccinate synthetase (448 aa).

GTP is bound by residues 36 to 42 and 64 to 66; these read GDEGKGK and GHT. Asp37 functions as the Proton acceptor in the catalytic mechanism. Asp37 and Gly64 together coordinate Mg(2+). IMP-binding positions include 37 to 40, 62 to 65, Thr154, Arg168, Asn246, Thr261, and Arg325; these read DEGK and NAGH. The active-site Proton donor is His65. Residue 321–327 coordinates substrate; sequence VTTKRKR. Residues Arg327, 353-355, and 436-438 contribute to the GTP site; these read KLD and GVG.

Belongs to the adenylosuccinate synthetase family. Homodimer. Mg(2+) serves as cofactor.

It localises to the cytoplasm. It catalyses the reaction IMP + L-aspartate + GTP = N(6)-(1,2-dicarboxyethyl)-AMP + GDP + phosphate + 2 H(+). Its pathway is purine metabolism; AMP biosynthesis via de novo pathway; AMP from IMP: step 1/2. Functionally, plays an important role in the de novo pathway and in the salvage pathway of purine nucleotide biosynthesis. Catalyzes the first committed step in the biosynthesis of AMP from IMP. The sequence is that of Adenylosuccinate synthetase from Drosophila virilis (Fruit fly).